We begin with the raw amino-acid sequence, 105 residues long: Large ribosomal subunit protein eL36 (105 aa).

Residue Lys62 is modified to N6-acetyllysine.

Belongs to the eukaryotic ribosomal protein eL36 family. Component of the large ribosomal subunit.

The protein localises to the cytoplasm. The protein resides in the cytosol. Functionally, component of the large ribosomal subunit. The ribosome is a large ribonucleoprotein complex responsible for the synthesis of proteins in the cell. The sequence is that of Large ribosomal subunit protein eL36 (Rpl36) from Rattus norvegicus (Rat).